We begin with the raw amino-acid sequence, 395 residues long: Putative 8-amino-7-oxononanoate synthase (395 aa).

Arg-23 provides a ligand contact to substrate. Position 110-111 (Gly-110–Tyr-111) interacts with pyridoxal 5'-phosphate. His-135 provides a ligand contact to substrate. Residues Ser-182, Asp-207 to His-210, and Thr-239 to Lys-242 each bind pyridoxal 5'-phosphate. The residue at position 242 (Lys-242) is an N6-(pyridoxal phosphate)lysine. Thr-356 contributes to the substrate binding site.

Belongs to the class-II pyridoxal-phosphate-dependent aminotransferase family. BioF subfamily. As to quaternary structure, homodimer. Requires pyridoxal 5'-phosphate as cofactor.

It carries out the reaction 6-carboxyhexanoyl-[ACP] + L-alanine + H(+) = (8S)-8-amino-7-oxononanoate + holo-[ACP] + CO2. It participates in cofactor biosynthesis; biotin biosynthesis. In terms of biological role, catalyzes the decarboxylative condensation of pimeloyl-[acyl-carrier protein] and L-alanine to produce 8-amino-7-oxononanoate (AON), [acyl-carrier protein], and carbon dioxide. This is Putative 8-amino-7-oxononanoate synthase (bioF) from Bacillus cereus (strain G9842).